We begin with the raw amino-acid sequence, 396 residues long: MRGYLLEFATIFTETLLFIMPYIHSLSATELASNSQKKVIVGMSGGVDSSVSAYILLQQGYQVEGLFMKNWEEDDNDEYCAAADDLKDAQAVADKLGIVLHQINFAAEYWDNVFEYFLEEYKSGRTPNPDIMCNKEIKFKAFLEFAAEELEADYIATGHYVRRREVDGHWQMLRGMDDNKDQSYFLYTLGEQHVGQTLFPIGDIEKPQVREIAQEQGLITHDKKDSTGICFIGERKFTDFLSQYLPAQPGVIETPEGQEIGQHQGLMYHTLGQRKGLMIGGMKEFGDDPWYVVDKDMARNVLIVGQGADHPRLYSNGLIANQLHWVDRTGPTSPMKCSVKTRYRQEDIACTLTPEPDGNVRVMFDEPQKAVTPGQSAVFYLNEVCLGGGIIESYIR.

ATP-binding positions include 42-49 (GMSGGVDS) and Met68. Positions 128 to 130 (NPD) are interaction with target base in tRNA. Catalysis depends on Cys133, which acts as the Nucleophile. Cys133 and Cys230 are joined by a disulfide. ATP is bound at residue Gly158. The interval 180–182 (KDQ) is interaction with tRNA. The active-site Cysteine persulfide intermediate is Cys230. The interaction with tRNA stretch occupies residues 342–343 (RY).

It belongs to the MnmA/TRMU family.

It is found in the cytoplasm. It carries out the reaction S-sulfanyl-L-cysteinyl-[protein] + uridine(34) in tRNA + AH2 + ATP = 2-thiouridine(34) in tRNA + L-cysteinyl-[protein] + A + AMP + diphosphate + H(+). In terms of biological role, catalyzes the 2-thiolation of uridine at the wobble position (U34) of tRNA, leading to the formation of s(2)U34. The protein is tRNA-specific 2-thiouridylase MnmA of Pseudoalteromonas atlantica (strain T6c / ATCC BAA-1087).